Consider the following 541-residue polypeptide: Glucose-6-phosphate isomerase (541 aa).

Glu347 (proton donor) is an active-site residue. Residues His378 and Lys506 contribute to the active site.

Belongs to the GPI family.

It is found in the cytoplasm. The catalysed reaction is alpha-D-glucose 6-phosphate = beta-D-fructose 6-phosphate. Its pathway is carbohydrate biosynthesis; gluconeogenesis. The protein operates within carbohydrate degradation; glycolysis; D-glyceraldehyde 3-phosphate and glycerone phosphate from D-glucose: step 2/4. Functionally, catalyzes the reversible isomerization of glucose-6-phosphate to fructose-6-phosphate. In Francisella tularensis subsp. holarctica (strain OSU18), this protein is Glucose-6-phosphate isomerase.